We begin with the raw amino-acid sequence, 645 residues long: Zinc finger protein 235 (645 aa).

The region spanning 8-86 is the KRAB domain; sequence VTFRDVAVVF…TSHDVNKLAR (79 aa). Disordered regions lie at residues 112 to 144 and 255 to 280; these read GAEQ…EFLS and KKSP…SVHP. Over residues 129-144 the composition is skewed to polar residues; it reads LPSNHSSSSDNQEFLS. 13 C2H2-type zinc fingers span residues 285–307, 313–335, 341–363, 369–391, 397–419, 425–447, 453–475, 481–503, 509–531, 537–559, 565–587, 593–615, and 621–643; these read YWCH…QRVH, YRCD…RRVH, YKCE…ERIH, YKCG…QRVH, YECN…QRVH, YKCE…QRVH, FHCS…QRIH, YRCE…QSVH, YKCG…HSVH, FKCN…QRVH, YKCD…QRIH, FKCE…QRVH, and YTCQ…QRVH.

The protein belongs to the krueppel C2H2-type zinc-finger protein family.

Its subcellular location is the nucleus. Its function is as follows. May be involved in transcriptional regulation. This Mus musculus (Mouse) protein is Zinc finger protein 235 (Znf235).